Consider the following 116-residue polypeptide: Large ribosomal subunit protein uL18 (116 aa).

The protein belongs to the universal ribosomal protein uL18 family. Part of the 50S ribosomal subunit; part of the 5S rRNA/L5/L18/L25 subcomplex. Contacts the 5S and 23S rRNAs.

This is one of the proteins that bind and probably mediate the attachment of the 5S RNA into the large ribosomal subunit, where it forms part of the central protuberance. This is Large ribosomal subunit protein uL18 from Pseudomonas syringae pv. tomato (strain ATCC BAA-871 / DC3000).